We begin with the raw amino-acid sequence, 370 residues long: Putrescine-binding periplasmic protein PotF (370 aa).

An N-terminal signal peptide occupies residues 1-26 (MTALNKKWLSGLVAGALMAVSVGTLA). Position 38 (Ser38) interacts with putrescine. Cysteines 175 and 239 form a disulfide. The putrescine site is built by Asp247 and Asp278.

The protein belongs to the bacterial solute-binding protein PotD/PotF family. In terms of assembly, the complex is composed of two ATP-binding proteins (PotG), two transmembrane proteins (PotH and PotI) and a solute-binding protein (PotF).

The protein localises to the periplasm. With respect to regulation, transport is feedback inhibited by intracellular polyamines. Its function is as follows. Part of the ABC transporter complex PotFGHI involved in putrescine uptake. Binds putrescine. Imports putrescine for maintenance of the optimal concentration of polyamines necessary for cell growth in the presence of glucose. This Escherichia coli (strain K12) protein is Putrescine-binding periplasmic protein PotF.